The sequence spans 493 residues: Mitochondrial distribution and morphology protein 10 (493 aa).

Belongs to the MDM10 family. In terms of assembly, component of the ER-mitochondria encounter structure (ERMES) or MDM complex, composed of MMM1, MDM10, MDM12 and MDM34. Associates with the mitochondrial outer membrane sorting assembly machinery SAM(core) complex, which consists of SAM35, SAM37 and SAM50, to form a SAM(holo) complex.

The protein resides in the mitochondrion outer membrane. In terms of biological role, component of the ERMES/MDM complex, which serves as a molecular tether to connect the endoplasmic reticulum and mitochondria. Components of this complex are involved in the control of mitochondrial shape and protein biogenesis and may function in phospholipid exchange. MDM10 is involved in the late assembly steps of the general translocase of the mitochondrial outer membrane (TOM complex). Functions in the TOM40-specific route of the assembly of outer membrane beta-barrel proteins, including the association of TOM40 with the receptor TOM22 and small TOM proteins. Can associate with the SAM(core) complex as well as the MDM12-MMM1 complex, both involved in late steps of the major beta-barrel assembly pathway, that is responsible for biogenesis of all outer membrane beta-barrel proteins. May act as a switch that shuttles between both complexes and channels precursor proteins into the TOM40-specific pathway. Plays a role in mitochondrial morphology and in the inheritance of mitochondria. The sequence is that of Mitochondrial distribution and morphology protein 10 from Saccharomyces cerevisiae (strain YJM789) (Baker's yeast).